We begin with the raw amino-acid sequence, 488 residues long: UDP-N-acetylmuramate--L-alanine ligase (488 aa).

Residue 127 to 133 (GTHGKTT) coordinates ATP.

This sequence belongs to the MurCDEF family.

The protein localises to the cytoplasm. The enzyme catalyses UDP-N-acetyl-alpha-D-muramate + L-alanine + ATP = UDP-N-acetyl-alpha-D-muramoyl-L-alanine + ADP + phosphate + H(+). The protein operates within cell wall biogenesis; peptidoglycan biosynthesis. Its function is as follows. Cell wall formation. This is UDP-N-acetylmuramate--L-alanine ligase from Shewanella baltica (strain OS223).